The sequence spans 304 residues: Porphobilinogen deaminase (304 aa).

Residue C240 is modified to S-(dipyrrolylmethanemethyl)cysteine.

The protein belongs to the HMBS family. In terms of assembly, monomer. Requires dipyrromethane as cofactor.

It catalyses the reaction 4 porphobilinogen + H2O = hydroxymethylbilane + 4 NH4(+). The protein operates within porphyrin-containing compound metabolism; protoporphyrin-IX biosynthesis; coproporphyrinogen-III from 5-aminolevulinate: step 2/4. Its function is as follows. Tetrapolymerization of the monopyrrole PBG into the hydroxymethylbilane pre-uroporphyrinogen in several discrete steps. The chain is Porphobilinogen deaminase from Xanthomonas oryzae pv. oryzae (strain MAFF 311018).